Consider the following 488-residue polypeptide: Glutamyl-tRNA(Gln) amidotransferase subunit A (488 aa).

Active-site charge relay system residues include K77 and S152. Residue S176 is the Acyl-ester intermediate of the active site.

It belongs to the amidase family. GatA subfamily. Heterotrimer of A, B and C subunits.

The enzyme catalyses L-glutamyl-tRNA(Gln) + L-glutamine + ATP + H2O = L-glutaminyl-tRNA(Gln) + L-glutamate + ADP + phosphate + H(+). Its function is as follows. Allows the formation of correctly charged Gln-tRNA(Gln) through the transamidation of misacylated Glu-tRNA(Gln) in organisms which lack glutaminyl-tRNA synthetase. The reaction takes place in the presence of glutamine and ATP through an activated gamma-phospho-Glu-tRNA(Gln). In Streptococcus pyogenes serotype M2 (strain MGAS10270), this protein is Glutamyl-tRNA(Gln) amidotransferase subunit A.